A 430-amino-acid chain; its full sequence is Glutamine synthetase leaf isozyme, chloroplastic (430 aa).

The transit peptide at 1–49 (MAQILAPSTQWQMRITKTSPCATPITSKMWSSLVMKQTKKVAHSAKFRV) directs the protein to the chloroplast. Positions 77-157 (IIAEYIWIGG…VVCDAYTPAG (81 aa)) constitute a GS beta-grasp domain. Residues 99 to 119 (SKPVSHPSEVPKWNYDGSSTG) form a disordered region. The 270-residue stretch at 161-430 (PTNKRHRAAE…LAAQKIALKV (270 aa)) folds into the GS catalytic domain.

The protein belongs to the glutamine synthetase family. In terms of assembly, homooctamer.

The protein localises to the plastid. Its subcellular location is the chloroplast. It carries out the reaction L-glutamate + NH4(+) + ATP = L-glutamine + ADP + phosphate + H(+). Its function is as follows. The light-modulated chloroplast enzyme, encoded by a nuclear gene and expressed primarily in leaves, is responsible for the reassimilation of the ammonia generated by photorespiration. This is Glutamine synthetase leaf isozyme, chloroplastic (GS2) from Pisum sativum (Garden pea).